We begin with the raw amino-acid sequence, 212 residues long: Imidazole glycerol phosphate synthase subunit HisH (212 aa).

The Glutamine amidotransferase type-1 domain maps to 4 to 210 (NIGIIDYGMG…LKWLHEKNSD (207 aa)). The Nucleophile role is filled by Cys82. Catalysis depends on residues His185 and Glu187.

In terms of assembly, heterodimer of HisH and HisF.

The protein resides in the cytoplasm. The enzyme catalyses 5-[(5-phospho-1-deoxy-D-ribulos-1-ylimino)methylamino]-1-(5-phospho-beta-D-ribosyl)imidazole-4-carboxamide + L-glutamine = D-erythro-1-(imidazol-4-yl)glycerol 3-phosphate + 5-amino-1-(5-phospho-beta-D-ribosyl)imidazole-4-carboxamide + L-glutamate + H(+). It carries out the reaction L-glutamine + H2O = L-glutamate + NH4(+). The protein operates within amino-acid biosynthesis; L-histidine biosynthesis; L-histidine from 5-phospho-alpha-D-ribose 1-diphosphate: step 5/9. IGPS catalyzes the conversion of PRFAR and glutamine to IGP, AICAR and glutamate. The HisH subunit catalyzes the hydrolysis of glutamine to glutamate and ammonia as part of the synthesis of IGP and AICAR. The resulting ammonia molecule is channeled to the active site of HisF. The polypeptide is Imidazole glycerol phosphate synthase subunit HisH (Prochlorococcus marinus (strain MIT 9211)).